A 136-amino-acid polypeptide reads, in one-letter code: Sec-independent protein translocase protein TatB (136 aa).

The helical transmembrane segment at 1-21 (MFDIGFPELALVAVIGLLVLG) threads the bilayer. The interval 89–136 (YEDMVEKNPATPMSSKASTPQTPSSGPDPQPVESHSHSDDASKQHDRS) is disordered. A compositionally biased stretch (polar residues) spans 99–115 (TPMSSKASTPQTPSSGP). Basic and acidic residues predominate over residues 122–136 (SHSHSDDASKQHDRS).

The protein belongs to the TatB family. The Tat system comprises two distinct complexes: a TatABC complex, containing multiple copies of TatA, TatB and TatC subunits, and a separate TatA complex, containing only TatA subunits. Substrates initially bind to the TatABC complex, which probably triggers association of the separate TatA complex to form the active translocon.

The protein resides in the cell inner membrane. Part of the twin-arginine translocation (Tat) system that transports large folded proteins containing a characteristic twin-arginine motif in their signal peptide across membranes. Together with TatC, TatB is part of a receptor directly interacting with Tat signal peptides. TatB may form an oligomeric binding site that transiently accommodates folded Tat precursor proteins before their translocation. This Hahella chejuensis (strain KCTC 2396) protein is Sec-independent protein translocase protein TatB.